A 1040-amino-acid polypeptide reads, in one-letter code: Isoleucine--tRNA ligase (1040 aa).

The 'HIGH' region signature appears at 47 to 57; sequence PYCSGSIHLGT. The short motif at 605–609 is the 'KMSKS' region element; it reads KMSKS. K608 is a binding site for ATP.

Belongs to the class-I aminoacyl-tRNA synthetase family. IleS type 2 subfamily. As to quaternary structure, monomer. The cofactor is Zn(2+).

Its subcellular location is the cytoplasm. It catalyses the reaction tRNA(Ile) + L-isoleucine + ATP = L-isoleucyl-tRNA(Ile) + AMP + diphosphate. Catalyzes the attachment of isoleucine to tRNA(Ile). As IleRS can inadvertently accommodate and process structurally similar amino acids such as valine, to avoid such errors it has two additional distinct tRNA(Ile)-dependent editing activities. One activity is designated as 'pretransfer' editing and involves the hydrolysis of activated Val-AMP. The other activity is designated 'posttransfer' editing and involves deacylation of mischarged Val-tRNA(Ile). This is Isoleucine--tRNA ligase from Methanococcus aeolicus (strain ATCC BAA-1280 / DSM 17508 / OCM 812 / Nankai-3).